The primary structure comprises 385 residues: Beta sliding clamp (385 aa).

Belongs to the beta sliding clamp family. As to quaternary structure, forms a ring-shaped head-to-tail homodimer around DNA which binds and tethers DNA polymerases and other proteins to the DNA. The DNA replisome complex has a single clamp-loading complex (3 tau and 1 each of delta, delta', psi and chi subunits) which binds 3 Pol III cores (1 core on the leading strand and 2 on the lagging strand) each with a beta sliding clamp dimer. Additional proteins in the replisome are other copies of gamma, psi and chi, Ssb, DNA helicase and RNA primase.

Its subcellular location is the cytoplasm. In terms of biological role, confers DNA tethering and processivity to DNA polymerases and other proteins. Acts as a clamp, forming a ring around DNA (a reaction catalyzed by the clamp-loading complex) which diffuses in an ATP-independent manner freely and bidirectionally along dsDNA. Initially characterized for its ability to contact the catalytic subunit of DNA polymerase III (Pol III), a complex, multichain enzyme responsible for most of the replicative synthesis in bacteria; Pol III exhibits 3'-5' exonuclease proofreading activity. The beta chain is required for initiation of replication as well as for processivity of DNA replication. The polypeptide is Beta sliding clamp (dnaN) (Borreliella burgdorferi (strain ATCC 35210 / DSM 4680 / CIP 102532 / B31) (Borrelia burgdorferi)).